We begin with the raw amino-acid sequence, 154 residues long: Plastocyanin, chloroplastic (154 aa).

A chloroplast-targeting transit peptide spans 1-57 (MAALSSAAVTIPSMAPSAPGRRRMRSSLVVRASLGKAAGAAAVAVAASAMLAGGAMA). The 97-residue stretch at 58–154 (QEVLLGANGG…AGMVGKVTVN (97 aa)) folds into the Plastocyanin-like domain. Cu cation-binding residues include histidine 94, cysteine 139, histidine 142, and methionine 147.

This sequence belongs to the plastocyanin family. Cu(2+) serves as cofactor.

Its subcellular location is the plastid. The protein resides in the chloroplast thylakoid membrane. Functionally, participates in electron transfer between P700 and the cytochrome b6-f complex in photosystem I. In Oryza sativa subsp. indica (Rice), this protein is Plastocyanin, chloroplastic (PETE).